A 371-amino-acid polypeptide reads, in one-letter code: Histidinol-phosphate aminotransferase 2 (371 aa).

Lysine 232 is modified (N6-(pyridoxal phosphate)lysine).

The protein belongs to the class-II pyridoxal-phosphate-dependent aminotransferase family. Histidinol-phosphate aminotransferase subfamily. As to quaternary structure, homodimer. Requires pyridoxal 5'-phosphate as cofactor.

It catalyses the reaction L-histidinol phosphate + 2-oxoglutarate = 3-(imidazol-4-yl)-2-oxopropyl phosphate + L-glutamate. Its pathway is amino-acid biosynthesis; L-histidine biosynthesis; L-histidine from 5-phospho-alpha-D-ribose 1-diphosphate: step 7/9. The sequence is that of Histidinol-phosphate aminotransferase 2 from Methylococcus capsulatus (strain ATCC 33009 / NCIMB 11132 / Bath).